We begin with the raw amino-acid sequence, 519 residues long: Cyclic AMP-responsive element-binding protein 3-like protein 2 (519 aa).

Over 1–374 (MEIMDSGEPF…SCRVTGTQTS (374 aa)) the chain is Cytoplasmic. Disordered regions lie at residues 58 to 77 (GRGD…PVPP), 85 to 121 (YSLC…MEQE), and 193 to 261 (GLEC…SGPL). Over residues 109–119 (ADSESDEWPME) the composition is skewed to acidic residues. Low complexity-rich tracts occupy residues 205-217 (SSVG…SQSP) and 240-249 (PSSLSSSPLL). Positions 291 to 354 (ALKKIRRKIK…KSLLQQLHSL (64 aa)) constitute a bZIP domain. Residues 293–322 (KKIRRKIKNKISAQESRRKKKEYVDALEKK) are basic motif. Positions 333-354 (LRRKVENLECTNKSLLQQLHSL) are leucine-zipper. The chain crosses the membrane as a helical; Signal-anchor for type II membrane protein span at residues 375-395 (TCLMVVVLCFSLFLGSFYPGL). The Lumenal portion of the chain corresponds to 396–519 (SPCSSITKAD…QLDRTVNETS (124 aa)). Positions 423-426 (RSLL) match the S1P recognition motif. N-linked (GlcNAc...) asparagine glycosylation is found at asparagine 485, asparagine 503, and asparagine 516.

Belongs to the bZIP family. ATF subfamily. Binds DNA as a dimer. In terms of processing, upon ER stress, translocated to the Golgi apparatus, where it is processed by regulated intramembrane proteolysis (RIP) to release the cytosol-facing N-terminal transcription factor domain. The cleavage is performed sequentially by site-1 and site-2 proteases (S1P/mbtps1 and S2P/mbtps2).

It is found in the endoplasmic reticulum membrane. The protein localises to the nucleus. Functionally, transcription factor involved in unfolded protein response (UPR). In the absence of endoplasmic reticulum (ER) stress, inserted into ER membranes, with N-terminal DNA-binding and transcription activation domains oriented toward the cytosolic face of the membrane. In response to ER stress, transported to the Golgi, where it is cleaved in a site-specific manner by resident proteases S1P/mbtps1 and S2P/mbtps2. The released N-terminal cytosolic domain is translocated to the nucleus to effect transcription of specific target genes. Plays a critical role in chondrogenesis. May protect neuroblastoma cells from ER stress-induced death. In vitro activates transcription of target genes via direct binding to the CRE site. This Danio rerio (Zebrafish) protein is Cyclic AMP-responsive element-binding protein 3-like protein 2 (creb3l2).